We begin with the raw amino-acid sequence, 500 residues long: Mucin-like protein 3 (500 aa).

Residues 1 to 27 form the signal peptide; it reads MAQPTSGLYSTFGFFICLLFFPASWEA. The Extracellular segment spans residues 28 to 429; it reads GANTFQELQK…GENNSFPVWA (402 aa). Disordered stretches follow at residues 55-198 and 275-324; these read THRA…SQKP and EGKT…PTAS. The span at 58–71 shows a compositional bias: basic and acidic residues; sequence ASSDQKTSRQHPPD. A compositionally biased stretch (polar residues) spans 76–89; sequence TATQKAKNQCNTTR. An N-linked (GlcNAc...) asparagine glycan is attached at N108. Composition is skewed to basic and acidic residues over residues 111–123 and 132–142; these read VRHE…EKDL and ARNERSADDPR. N148 carries an N-linked (GlcNAc...) asparagine glycan. Polar residues-rich tracts occupy residues 159–178, 279–289, and 298–324; these read PRRN…TTKS, SPASESSSQAQ, and TSAS…PTAS. Residues 430–450 form a helical membrane-spanning segment; that stretch reads IVIVILMAVIILLVFIGLILL. Topologically, residues 451 to 500 are cytoplasmic; that stretch reads VSCASRARHVLTQNSEEPEPQPEDKGSRNSYPVYLMEQQNLNLNQIPSPP.

The protein localises to the cell membrane. Its subcellular location is the cytoplasm. May modulate NF-kappaB signaling and play a role in cell growth. This Mus musculus (Mouse) protein is Mucin-like protein 3.